Here is a 516-residue protein sequence, read N- to C-terminus: Adenosine deaminase (516 aa).

The first 20 residues, 1-20, serve as a signal peptide directing secretion; the sequence is MFPRLIVWLLAASAVHAVLD.

This sequence belongs to the metallo-dependent hydrolases superfamily. Adenosine and AMP deaminases family. ADGF subfamily. The cofactor is Zn(2+). Salivary gland (at protein level).

It is found in the secreted. The enzyme catalyses adenosine + H2O + H(+) = inosine + NH4(+). In terms of biological role, catalyzes the deamination of adenosine to inosine. In Phlebotomus duboscqi (Sandfly), this protein is Adenosine deaminase.